A 224-amino-acid polypeptide reads, in one-letter code: Cysteine-rich hydrophobic domain-containing protein 1 (224 aa).

Residues 1–80 (MSILLPNMAE…PPPRVVSEEH (80 aa)) form a disordered region. The segment covering 13–25 (TISELEEEEEEEA) has biased composition (acidic residues). The span at 26 to 40 (ATSSSSPSSSSSVSG) shows a compositional bias: low complexity. A compositionally biased stretch (acidic residues) spans 41–69 (PDDDEEDEEEEEEEEEEEEEEEEEEEEEA). Residues 42 to 70 (DDDEEDEEEEEEEEEEEEEEEEEEEEEAP) are a coiled coil.

The protein belongs to the CHIC family. Palmitoylated. As to expression, equally expressed in various parts of the brain.

Its subcellular location is the cell membrane. It localises to the cytoplasmic vesicle. The sequence is that of Cysteine-rich hydrophobic domain-containing protein 1 (CHIC1) from Homo sapiens (Human).